The sequence spans 154 residues: Ribonuclease H (154 aa).

Positions 1 to 141 (MKRIEAYTDG…ADELAREGME (141 aa)) constitute an RNase H type-1 domain. The Mg(2+) site is built by Asp9, Glu47, Asp69, and Asp133.

Belongs to the RNase H family. As to quaternary structure, monomer. Mg(2+) serves as cofactor.

It localises to the cytoplasm. The catalysed reaction is Endonucleolytic cleavage to 5'-phosphomonoester.. Endonuclease that specifically degrades the RNA of RNA-DNA hybrids. The protein is Ribonuclease H of Brucella anthropi (strain ATCC 49188 / DSM 6882 / CCUG 24695 / JCM 21032 / LMG 3331 / NBRC 15819 / NCTC 12168 / Alc 37) (Ochrobactrum anthropi).